The following is a 301-amino-acid chain: ATP synthase gamma chain (301 aa).

The protein belongs to the ATPase gamma chain family. As to quaternary structure, F-type ATPases have 2 components, CF(1) - the catalytic core - and CF(0) - the membrane proton channel. CF(1) has five subunits: alpha(3), beta(3), gamma(1), delta(1), epsilon(1). CF(0) has three main subunits: a, b and c.

The protein resides in the cell inner membrane. In terms of biological role, produces ATP from ADP in the presence of a proton gradient across the membrane. The gamma chain is believed to be important in regulating ATPase activity and the flow of protons through the CF(0) complex. This chain is ATP synthase gamma chain, found in Bordetella bronchiseptica (strain ATCC BAA-588 / NCTC 13252 / RB50) (Alcaligenes bronchisepticus).